A 287-amino-acid polypeptide reads, in one-letter code: ATP synthase gamma chain (287 aa).

Belongs to the ATPase gamma chain family. F-type ATPases have 2 components, CF(1) - the catalytic core - and CF(0) - the membrane proton channel. CF(1) has five subunits: alpha(3), beta(3), gamma(1), delta(1), epsilon(1). CF(0) has three main subunits: a, b and c.

It localises to the cell inner membrane. Functionally, produces ATP from ADP in the presence of a proton gradient across the membrane. The gamma chain is believed to be important in regulating ATPase activity and the flow of protons through the CF(0) complex. The sequence is that of ATP synthase gamma chain from Proteus mirabilis (strain HI4320).